A 3779-amino-acid polypeptide reads, in one-letter code: Protein DDB_G0268328 (3779 aa).

12 disordered regions span residues 24–56 (RQIK…KDGS), 1001–1028 (HEDE…DDDD), 1137–1165 (QDST…QQQQ), 1513–1538 (PTNS…SLLS), 1656–1690 (ETTV…NNKE), 2027–2054 (SNSS…DSNN), 2144–2184 (NNNN…NNSS), 2280–2325 (ISTT…NEQQ), 2508–2527 (QINN…REEG), 2720–2748 (DGNN…NDSS), 2975–3030 (ESND…DSIK), and 3427–3450 (QSNT…SGKL). Composition is skewed to low complexity over residues 26–56 (IKSQ…KDGS), 1011–1020 (DNSNNSNSQD), 1149–1165 (YYHQ…QQQQ), and 1515–1538 (NSIY…SLLS). Residues 1656 to 1671 (ETTVLEKETKETKDNN) show a composition bias toward basic and acidic residues. Over residues 1672 to 1687 (LENNNNNTNNSNNNNN) the composition is skewed to low complexity. Composition is skewed to low complexity over residues 2144–2182 (NNNN…NNNN) and 2285–2322 (NNNN…NNNN). Low complexity-rich tracts occupy residues 2722 to 2745 (NNNN…QNNN) and 3015 to 3030 (SVNN…DSIK). The segment covering 3433 to 3446 (GTGGGGGNGGGNNG) has biased composition (gly residues).

This is Protein DDB_G0268328 from Dictyostelium discoideum (Social amoeba).